We begin with the raw amino-acid sequence, 399 residues long: Elongation factor Tu (399 aa).

Residues 10-204 form the tr-type G domain; it reads KPHVNIGTIG…AVDEAIPEPE (195 aa). The interval 19 to 26 is G1; the sequence is GHVDHGKT. Residue 19 to 26 coordinates GTP; that stretch reads GHVDHGKT. Thr-26 is a Mg(2+) binding site. The tract at residues 60–64 is G2; the sequence is GITIN. The G3 stretch occupies residues 81 to 84; that stretch reads DCPG. GTP is bound by residues 81–85 and 136–139; these read DCPGH and NKCD. The segment at 136–139 is G4; it reads NKCD. Residues 174 to 176 form a G5 region; sequence SGL.

The protein belongs to the TRAFAC class translation factor GTPase superfamily. Classic translation factor GTPase family. EF-Tu/EF-1A subfamily. Monomer.

The protein localises to the cytoplasm. The catalysed reaction is GTP + H2O = GDP + phosphate + H(+). GTP hydrolase that promotes the GTP-dependent binding of aminoacyl-tRNA to the A-site of ribosomes during protein biosynthesis. In Parasynechococcus marenigrum (strain WH8102), this protein is Elongation factor Tu.